Reading from the N-terminus, the 31-residue chain is Relaxin B chain (31 aa).

Gln1 carries the pyrrolidone carboxylic acid modification.

This sequence belongs to the insulin family. In terms of assembly, heterodimer of a B chain and an A chain linked by two disulfide bonds.

The protein localises to the secreted. Relaxin is an ovarian hormone that acts with estrogen to produce dilatation of the birth canal in many mammals. The chain is Relaxin B chain from Phocoenoides dalli dalli (Dall's porpoise).